A 406-amino-acid polypeptide reads, in one-letter code: Testis-specific Y-encoded-like protein 5 (406 aa).

Over residues Met1–Val25 the composition is skewed to basic residues. Disordered regions lie at residues Met1 to Leu67, Ile132 to Ala164, and Arg382 to Asn406. Residues Ala27–Pro38 are compositionally biased toward basic and acidic residues. The segment covering Ala49–Ala62 has biased composition (low complexity). The segment covering Arg382–Gly392 has biased composition (basic and acidic residues).

Belongs to the nucleosome assembly protein (NAP) family. As to quaternary structure, interacts with USP7.

Its function is as follows. Involved in modulation of cell growth and cellular response to gamma radiation probably via regulation of the Akt signaling pathway. Involved in regulation of p53/TP53. Suppresses p53/TP53 protein levels and promotes its ubiquitination; the function is dependent on USP7 and independent on MDM2. Proposed to displace p53/TP53 from interaction with USP7. The chain is Testis-specific Y-encoded-like protein 5 (Tspyl5) from Mus musculus (Mouse).